A 65-amino-acid polypeptide reads, in one-letter code: Subtilisin inhibitor CLSI-I (65 aa).

It belongs to the protease inhibitor I13 (potato type I serine protease inhibitor) family.

Inhibits subtilisin-type microbial serine proteases including proteinase K, subtilisin BPN', subtilisin Carlsberg, subtilisin E, A.oryzae protease and S.griseus alkaline protease. Weakly inhibits pronase E. Does not inhibit trypsin or chymotrypsin. The protein is Subtilisin inhibitor CLSI-I of Canavalia lineata (Beach bean).